A 773-amino-acid polypeptide reads, in one-letter code: Protein YhgF (773 aa).

Residues 651-720 (GMILEGAVTN…QRKRIALTMR (70 aa)) form the S1 motif domain. A disordered region spans residues 721–773 (LDEQPGETNARRGGGNERPQNNRPAAKPRGREAQPAGNSAMMDALAAAMGKKR).

This is Protein YhgF (yhgF) from Escherichia coli (strain K12).